We begin with the raw amino-acid sequence, 89 residues long: Small ribosomal subunit protein bS16 (89 aa).

Belongs to the bacterial ribosomal protein bS16 family.

This Geobacillus stearothermophilus (Bacillus stearothermophilus) protein is Small ribosomal subunit protein bS16.